A 332-amino-acid chain; its full sequence is Protein pelota homolog (332 aa).

This sequence belongs to the eukaryotic release factor 1 family. Pelota subfamily. Monomer. A divalent metal cation serves as cofactor.

It is found in the cytoplasm. In terms of biological role, may function in recognizing stalled ribosomes, interact with stem-loop structures in stalled mRNA molecules, and effect endonucleolytic cleavage of the mRNA. May play a role in the release non-functional ribosomes and degradation of damaged mRNAs. Has endoribonuclease activity. The protein is Protein pelota homolog of Pyrobaculum aerophilum (strain ATCC 51768 / DSM 7523 / JCM 9630 / CIP 104966 / NBRC 100827 / IM2).